The following is a 275-amino-acid chain: F420-dependent methylenetetrahydromethanopterin dehydrogenase (275 aa).

It belongs to the MTD family.

The enzyme catalyses 5,10-methylenetetrahydromethanopterin + oxidized coenzyme F420-(gamma-L-Glu)(n) + 2 H(+) = 5,10-methenyl-5,6,7,8-tetrahydromethanopterin + reduced coenzyme F420-(gamma-L-Glu)(n). Its pathway is one-carbon metabolism; methanogenesis from CO(2); 5,10-methylene-5,6,7,8-tetrahydromethanopterin from 5,10-methenyl-5,6,7,8-tetrahydromethanopterin (coenzyme F420 route): step 1/1. Catalyzes the reversible reduction of methenyl-H(4)MPT(+) to methylene-H(4)MPT. This chain is F420-dependent methylenetetrahydromethanopterin dehydrogenase, found in Methanobrevibacter smithii (strain ATCC 35061 / DSM 861 / OCM 144 / PS).